Consider the following 422-residue polypeptide: Adenosylhomocysteinase (422 aa).

Substrate is bound by residues aspartate 129 and glutamate 154. 155–157 (TTT) contacts NAD(+). Positions 184 and 188 each coordinate substrate. NAD(+)-binding positions include asparagine 189, 218-223 (GYGWCG), glutamate 241, asparagine 276, 297-299 (AGH), and asparagine 344.

This sequence belongs to the adenosylhomocysteinase family. Requires NAD(+) as cofactor.

The protein resides in the cytoplasm. It carries out the reaction S-adenosyl-L-homocysteine + H2O = L-homocysteine + adenosine. Its pathway is amino-acid biosynthesis; L-homocysteine biosynthesis; L-homocysteine from S-adenosyl-L-homocysteine: step 1/1. May play a key role in the regulation of the intracellular concentration of adenosylhomocysteine. The chain is Adenosylhomocysteinase from Pyrococcus abyssi (strain GE5 / Orsay).